A 397-amino-acid polypeptide reads, in one-letter code: Acetate kinase (397 aa).

Asn-8 lines the Mg(2+) pocket. An ATP-binding site is contributed by Lys-15. Arg-90 is a substrate binding site. Asp-147 serves as the catalytic Proton donor/acceptor. ATP is bound at residue 207 to 211 (HLGAG). Glu-382 contributes to the Mg(2+) binding site.

Belongs to the acetokinase family. In terms of assembly, homodimer. The cofactor is Mg(2+). Requires Mn(2+) as cofactor.

The protein resides in the cytoplasm. The catalysed reaction is acetate + ATP = acetyl phosphate + ADP. The protein operates within metabolic intermediate biosynthesis; acetyl-CoA biosynthesis; acetyl-CoA from acetate: step 1/2. Functionally, catalyzes the formation of acetyl phosphate from acetate and ATP. Can also catalyze the reverse reaction. In Lactiplantibacillus plantarum (strain ATCC BAA-793 / NCIMB 8826 / WCFS1) (Lactobacillus plantarum), this protein is Acetate kinase.